The sequence spans 374 residues: Chaperone protein DnaJ (374 aa).

The region spanning 5–71 (DLYAILGVCR…QKRASYDRFG (67 aa)) is the J domain. The CR-type zinc finger occupies 132–210 (GVEKQIRIAT…CQGTGRVKDT (79 aa)). 8 residues coordinate Zn(2+): C145, C148, C162, C165, C184, C187, C198, and C201. CXXCXGXG motif repeat units lie at residues 145-152 (CGECHGSG), 162-169 (CPTCNGAG), 184-191 (CPTCHGRG), and 198-205 (CNKCQGTG).

Belongs to the DnaJ family. As to quaternary structure, homodimer. Requires Zn(2+) as cofactor.

It is found in the cytoplasm. Its function is as follows. Participates actively in the response to hyperosmotic and heat shock by preventing the aggregation of stress-denatured proteins and by disaggregating proteins, also in an autonomous, DnaK-independent fashion. Unfolded proteins bind initially to DnaJ; upon interaction with the DnaJ-bound protein, DnaK hydrolyzes its bound ATP, resulting in the formation of a stable complex. GrpE releases ADP from DnaK; ATP binding to DnaK triggers the release of the substrate protein, thus completing the reaction cycle. Several rounds of ATP-dependent interactions between DnaJ, DnaK and GrpE are required for fully efficient folding. Also involved, together with DnaK and GrpE, in the DNA replication of plasmids through activation of initiation proteins. In Dichelobacter nodosus (strain VCS1703A), this protein is Chaperone protein DnaJ.